Reading from the N-terminus, the 269-residue chain is Phosphatidylglycerol--prolipoprotein diacylglyceryl transferase (269 aa).

The next 7 membrane-spanning stretches (helical) occupy residues Ile10–Phe30, Ala56–Tyr76, Ile91–Phe111, Phe126–Gly146, Pro172–Phe192, Tyr200–Val220, and Glu237–Leu257. Arg139 contributes to the a 1,2-diacyl-sn-glycero-3-phospho-(1'-sn-glycerol) binding site.

Belongs to the Lgt family.

Its subcellular location is the cell inner membrane. It catalyses the reaction L-cysteinyl-[prolipoprotein] + a 1,2-diacyl-sn-glycero-3-phospho-(1'-sn-glycerol) = an S-1,2-diacyl-sn-glyceryl-L-cysteinyl-[prolipoprotein] + sn-glycerol 1-phosphate + H(+). It participates in protein modification; lipoprotein biosynthesis (diacylglyceryl transfer). Functionally, catalyzes the transfer of the diacylglyceryl group from phosphatidylglycerol to the sulfhydryl group of the N-terminal cysteine of a prolipoprotein, the first step in the formation of mature lipoproteins. This chain is Phosphatidylglycerol--prolipoprotein diacylglyceryl transferase, found in Marinomonas sp. (strain MWYL1).